A 539-amino-acid chain; its full sequence is Bifunctional purine biosynthesis protein PurH (539 aa).

The MGS-like domain occupies 8 to 159; sequence FPIPDLHRVR…KNYAYTGVVT (152 aa).

This sequence belongs to the PurH family.

The enzyme catalyses (6R)-10-formyltetrahydrofolate + 5-amino-1-(5-phospho-beta-D-ribosyl)imidazole-4-carboxamide = 5-formamido-1-(5-phospho-D-ribosyl)imidazole-4-carboxamide + (6S)-5,6,7,8-tetrahydrofolate. The catalysed reaction is IMP + H2O = 5-formamido-1-(5-phospho-D-ribosyl)imidazole-4-carboxamide. It participates in purine metabolism; IMP biosynthesis via de novo pathway; 5-formamido-1-(5-phospho-D-ribosyl)imidazole-4-carboxamide from 5-amino-1-(5-phospho-D-ribosyl)imidazole-4-carboxamide (10-formyl THF route): step 1/1. The protein operates within purine metabolism; IMP biosynthesis via de novo pathway; IMP from 5-formamido-1-(5-phospho-D-ribosyl)imidazole-4-carboxamide: step 1/1. The chain is Bifunctional purine biosynthesis protein PurH from Bartonella tribocorum (strain CIP 105476 / IBS 506).